Reading from the N-terminus, the 581-residue chain is Leucine-rich repeat-containing protein 15 (581 aa).

Positions 1–21 (MPLKHYLLLLVGCQAWGAGLA) are cleaved as a signal peptide. The region spanning 22–53 (YHGCPSECTCSRASQVECTGARIVAVPTPLPW) is the LRRNT domain. At 22-538 (YHGCPSECTC…VWGMTQAQSG (517 aa)) the chain is on the extracellular side. 15 LRR repeats span residues 54–75 (NAMSLQILNTHITELNESPFLN), 78–99 (ALIALRIEKNELSRITPGAFRN), 102–123 (SLRYLSLANNKLQVLPIGLFQG), 126–147 (SLESLLLSSNQLLQIQPAHFSQ), 150–171 (NLKELQLHGNHLEYIPDGAFDH), 174–195 (GLTKLNLGKNSLTHISPRVFQH), 198–219 (NLQVLRLYENRLTDIPMGTFDG), 222–243 (NLQELALQQNQIGLLSPGLFHN), 246–267 (NLQRLYLSNNHISQLPPSVFMQ), 270–291 (QLNRLTLFGNSLKELSPGIFGP), 294–315 (NLRELWLYDNHISSLPDNVFSN), 318–339 (QLQVLILSRNQISFISPGAFNG), 342–363 (ELRELSLHTNALQDLDGNVFRM), 366–387 (NLQNISLQNNRLRQLPGNIFAN), and 390–411 (GLMAIQLQNNQLENLPLGIFDH). Asn75 is a glycosylation site (N-linked (GlcNAc...) asparagine). N-linked (GlcNAc...) asparagine glycosylation occurs at Asn369. The LRRCT domain occupies 423–475 (NPWRCDSDILPLRNWLLLNQPRLGTDTVPVCFSPANVRGQSLIIINVNVAVPS). The segment at 489–509 (WYPDTPSYPDTTSVSSTTELT) is disordered. Residues 499–509 (TTSVSSTTELT) are compositionally biased toward low complexity. A helical transmembrane segment spans residues 539–559 (LAIAAIVIGIVALACSLAACV). At 560-581 (GCCCCKKRSQAVLMQMKAPNEC) the chain is on the cytoplasmic side.

As to quaternary structure, (Microbial infection) Interacts with human coronavirus SARS-CoV-2 spike protein (via RBD domain); the interaction is direct and sequesters virions at the cell surface. In terms of assembly, (Microbial infection) Interacts with human coronavirus SARS-CoV-2 spike protein (via RBD domain); the interaction is direct. In terms of tissue distribution, expressed in brain and placenta. Expressed in lung fibroblasts. Expressed in chodrocytes.

It is found in the cell membrane. Functionally, (Microbial infection) Modulates the ability of SARS-CoV-2 to infect host cells through interaction with the spike protein. Does not act as a SARS-CoV-2 entry receptor but sequesters virions and antagonizes in trans SARS-CoV-2 infection of ACE2(+) cells when expressed on nearby cells. This chain is Leucine-rich repeat-containing protein 15 (LRRC15), found in Homo sapiens (Human).